Reading from the N-terminus, the 1297-residue chain is Phosphoribosylformylglycinamidine synthase (1297 aa).

The segment at 304–323 (PFPGAATGSGGEIRDEGATG) is disordered. ATP contacts are provided by residues 307 to 318 (GAATGSGGEIRD) and Ala-678. 4 residues coordinate Mg(2+): Asp-679, Glu-718, Asn-722, and Asp-886. ATP is bound at residue Ser-888. The 255-residue stretch at 1043-1297 (RIAILREQGV…LFQNARVALG (255 aa)) folds into the Glutamine amidotransferase type-1 domain. The active-site Nucleophile is the Cys-1137. Residues His-1262 and Glu-1264 contribute to the active site.

It in the N-terminal section; belongs to the FGAMS family. Monomer.

The protein resides in the cytoplasm. The catalysed reaction is N(2)-formyl-N(1)-(5-phospho-beta-D-ribosyl)glycinamide + L-glutamine + ATP + H2O = 2-formamido-N(1)-(5-O-phospho-beta-D-ribosyl)acetamidine + L-glutamate + ADP + phosphate + H(+). Its pathway is purine metabolism; IMP biosynthesis via de novo pathway; 5-amino-1-(5-phospho-D-ribosyl)imidazole from N(2)-formyl-N(1)-(5-phospho-D-ribosyl)glycinamide: step 1/2. In terms of biological role, phosphoribosylformylglycinamidine synthase involved in the purines biosynthetic pathway. Catalyzes the ATP-dependent conversion of formylglycinamide ribonucleotide (FGAR) and glutamine to yield formylglycinamidine ribonucleotide (FGAM) and glutamate. The protein is Phosphoribosylformylglycinamidine synthase of Histophilus somni (strain 129Pt) (Haemophilus somnus).